The chain runs to 737 residues: Fibronectin type III domain-containing protein 7 (737 aa).

An N-terminal signal peptide occupies residues 1–25 (MAGRPEKCFSLIRFTLLCLKMVISS). 8 consecutive Fibronectin type-III domains span residues 28–115 (APEI…TVLA), 116–203 (APVL…SPRA), 204–288 (PANI…TVAC), 289–373 (APGR…TAPC), 374–459 (CPND…TAPC), 460–544 (SPEI…TVPC), 545–633 (CPAG…CPLG), and 631–715 (PLGV…YSVT). A glycan (N-linked (GlcNAc...) asparagine) is linked at asparagine 230. The N-linked (GlcNAc...) asparagine glycan is linked to asparagine 433.

It localises to the secreted. The chain is Fibronectin type III domain-containing protein 7 (Fndc7) from Mus musculus (Mouse).